The primary structure comprises 197 residues: dITP/XTP pyrophosphatase (197 aa).

8 to 13 contributes to the substrate binding site; it reads TGNPGK. 2 residues coordinate Mg(2+): E40 and D69. D69 functions as the Proton acceptor in the catalytic mechanism. Residues S70, 154–157, K177, and 182–183 each bind substrate; these read FGYD and HR.

Belongs to the HAM1 NTPase family. As to quaternary structure, homodimer. Mg(2+) serves as cofactor.

It catalyses the reaction XTP + H2O = XMP + diphosphate + H(+). The enzyme catalyses dITP + H2O = dIMP + diphosphate + H(+). It carries out the reaction ITP + H2O = IMP + diphosphate + H(+). In terms of biological role, pyrophosphatase that catalyzes the hydrolysis of nucleoside triphosphates to their monophosphate derivatives, with a high preference for the non-canonical purine nucleotides XTP (xanthosine triphosphate), dITP (deoxyinosine triphosphate) and ITP. Seems to function as a house-cleaning enzyme that removes non-canonical purine nucleotides from the nucleotide pool, thus preventing their incorporation into DNA/RNA and avoiding chromosomal lesions. This Photorhabdus laumondii subsp. laumondii (strain DSM 15139 / CIP 105565 / TT01) (Photorhabdus luminescens subsp. laumondii) protein is dITP/XTP pyrophosphatase.